A 131-amino-acid chain; its full sequence is MRKPCYAVYHPALRLKCLVRKGLGKIKGDTDMCDKQQLKKKEKEKQRAQKVACGPRDPPCTFSRSYTDQKRKEIHLGSTEWGLKESFTLTRGPNRRGNVGKGVKRPMVNKKLGQLELTSLDLRWQKEGKGN.

The protein localises to the mitochondrion. It localises to the nucleus. In terms of biological role, has a role in meiosis. In Schizosaccharomyces pombe (strain 972 / ATCC 24843) (Fission yeast), this protein is Meiotically up-regulated gene 115 protein (mug115).